The following is a 372-amino-acid chain: Chaperone protein DnaJ (372 aa).

Residues aspartate 5 to glycine 70 form the J domain. The CR-type zinc finger occupies glycine 134–glutamate 212. Residues cysteine 147, cysteine 150, cysteine 164, cysteine 167, cysteine 186, cysteine 189, cysteine 200, and cysteine 203 each contribute to the Zn(2+) site. 4 CXXCXGXG motif repeats span residues cysteine 147–glycine 154, cysteine 164–glycine 171, cysteine 186–glycine 193, and cysteine 200–glycine 207.

This sequence belongs to the DnaJ family. In terms of assembly, homodimer. Zn(2+) serves as cofactor.

The protein resides in the cytoplasm. Functionally, participates actively in the response to hyperosmotic and heat shock by preventing the aggregation of stress-denatured proteins and by disaggregating proteins, also in an autonomous, DnaK-independent fashion. Unfolded proteins bind initially to DnaJ; upon interaction with the DnaJ-bound protein, DnaK hydrolyzes its bound ATP, resulting in the formation of a stable complex. GrpE releases ADP from DnaK; ATP binding to DnaK triggers the release of the substrate protein, thus completing the reaction cycle. Several rounds of ATP-dependent interactions between DnaJ, DnaK and GrpE are required for fully efficient folding. Also involved, together with DnaK and GrpE, in the DNA replication of plasmids through activation of initiation proteins. The protein is Chaperone protein DnaJ of Wolbachia sp. subsp. Drosophila simulans (strain wRi).